The chain runs to 250 residues: Triosephosphate isomerase (250 aa).

9-11 lines the substrate pocket; sequence NWK. The active-site Electrophile is histidine 95. Glutamate 167 functions as the Proton acceptor in the catalytic mechanism. Residues glycine 173, serine 213, and 234-235 contribute to the substrate site; that span reads GG.

It belongs to the triosephosphate isomerase family. As to quaternary structure, homodimer.

Its subcellular location is the cytoplasm. The enzyme catalyses D-glyceraldehyde 3-phosphate = dihydroxyacetone phosphate. It participates in carbohydrate biosynthesis; gluconeogenesis. Its pathway is carbohydrate degradation; glycolysis; D-glyceraldehyde 3-phosphate from glycerone phosphate: step 1/1. Involved in the gluconeogenesis. Catalyzes stereospecifically the conversion of dihydroxyacetone phosphate (DHAP) to D-glyceraldehyde-3-phosphate (G3P). This chain is Triosephosphate isomerase, found in Exiguobacterium sibiricum (strain DSM 17290 / CCUG 55495 / CIP 109462 / JCM 13490 / 255-15).